The chain runs to 101 residues: Protein Tat (101 aa).

The disordered stretch occupies residues 1–20 (MEPVDPNLEPWKHPGSQPTT). The segment at 1 to 24 (MEPVDPNLEPWKHPGSQPTTACSN) is interaction with human CREBBP. Residues 1 to 48 (MEPVDPNLEPWKHPGSQPTTACSNCYCKVCCWHCQLCFLKKGLGISYG) form a transactivation region. 3 residues coordinate Zn(2+): cysteine 22, cysteine 25, and cysteine 27. The segment at 22–37 (CSNCYCKVCCWHCQLC) is cysteine-rich. Lysine 28 is subject to N6-acetyllysine; by host PCAF. The Zn(2+) site is built by cysteine 30, histidine 33, cysteine 34, and cysteine 37. The tract at residues 38–48 (FLKKGLGISYG) is core. A disordered region spans residues 48–101 (GKKKRKPRRGPPQGSKDHQTLIPKQPLPQSQRVSAGQEESKKKVESKAKTDRFA). Residues 49 to 57 (KKKRKPRRG) carry the Nuclear localization signal, RNA-binding (TAR), and protein transduction motif. Residues 49 to 86 (KKKRKPRRGPPQGSKDHQTLIPKQPLPQSQRVSAGQEE) are interaction with the host capping enzyme RNGTT. Lysine 50 and lysine 51 each carry N6-acetyllysine; by host EP300 and GCN5L2. Arginine 52 is modified (asymmetric dimethylarginine; by host PRMT6). Lysine 71 participates in a covalent cross-link: Glycyl lysine isopeptide (Lys-Gly) (interchain with G-Cter in ubiquitin). A compositionally biased stretch (basic and acidic residues) spans 85-101 (EESKKKVESKAKTDRFA).

The protein belongs to the lentiviruses Tat family. As to quaternary structure, interacts with host CCNT1. Associates with the P-TEFb complex composed at least of Tat, P-TEFb (CDK9 and CCNT1), TAR RNA, RNA Pol II. Recruits the HATs CREBBP, TAF1/TFIID, EP300, PCAF and GCN5L2. Interacts with host KAT5/Tip60; this interaction targets the latter to degradation. Interacts with the host deacetylase SIRT1. Interacts with host capping enzyme RNGTT; this interaction stimulates RNGTT. Binds to host KDR, and to the host integrins ITGAV/ITGB3 and ITGA5/ITGB1. Interacts with host KPNB1/importin beta-1 without previous binding to KPNA1/importin alpha-1. Interacts with EIF2AK2. Interacts with host nucleosome assembly protein NAP1L1; this interaction may be required for the transport of Tat within the nucleus, since the two proteins interact at the nuclear rim. Interacts with host C1QBP/SF2P32; this interaction involves lysine-acetylated Tat. Interacts with the host chemokine receptors CCR2, CCR3 and CXCR4. Interacts with host DPP4/CD26; this interaction may trigger an anti-proliferative effect. Interacts with host LDLR. Interacts with the host extracellular matrix metalloproteinase MMP1. Interacts with host PRMT6; this interaction mediates Tat's methylation. Interacts with, and is ubiquitinated by MDM2/Hdm2. Interacts with host PSMC3 and HTATIP2. Interacts with STAB1; this interaction may overcome SATB1-mediated repression of IL2 and IL2RA (interleukin) in T cells by binding to the same domain than HDAC1. Interacts (when acetylated) with human CDK13, thereby increasing HIV-1 mRNA splicing and promoting the production of the doubly spliced HIV-1 protein Nef. Interacts with host TBP; this interaction modulates the activity of transcriptional pre-initiation complex. Interacts with host RELA. Interacts with host PLSCR1; this interaction negatively regulates Tat transactivation activity by altering its subcellular distribution. In terms of processing, asymmetrical arginine methylation by host PRMT6 seems to diminish the transactivation capacity of Tat and affects the interaction with host CCNT1. Post-translationally, acetylation by EP300, CREBBP, GCN5L2/GCN5 and PCAF regulates the transactivation activity of Tat. EP300-mediated acetylation of Lys-50 promotes dissociation of Tat from the TAR RNA through the competitive binding to PCAF's bromodomain. In addition, the non-acetylated Tat's N-terminus can also interact with PCAF. PCAF-mediated acetylation of Lys-28 enhances Tat's binding to CCNT1. Lys-50 is deacetylated by SIRT1. Polyubiquitination by host MDM2 does not target Tat to degradation, but activates its transactivation function and fosters interaction with CCNT1 and TAR RNA. In terms of processing, phosphorylated by EIF2AK2 on serine and threonine residues adjacent to the basic region important for TAR RNA binding and function. Phosphorylation of Tat by EIF2AK2 is dependent on the prior activation of EIF2AK2 by dsRNA.

Its subcellular location is the host nucleus. It is found in the host nucleolus. The protein localises to the host cytoplasm. The protein resides in the secreted. In terms of biological role, transcriptional activator that increases RNA Pol II processivity, thereby increasing the level of full-length viral transcripts. Recognizes a hairpin structure at the 5'-LTR of the nascent viral mRNAs referred to as the transactivation responsive RNA element (TAR) and recruits the cyclin T1-CDK9 complex (P-TEFb complex) that will in turn hyperphosphorylate the RNA polymerase II to allow efficient elongation. The CDK9 component of P-TEFb and other Tat-activated kinases hyperphosphorylate the C-terminus of RNA Pol II that becomes stabilized and much more processive. Other factors such as HTATSF1/Tat-SF1, SUPT5H/SPT5, and HTATIP2 are also important for Tat's function. Besides its effect on RNA Pol II processivity, Tat induces chromatin remodeling of proviral genes by recruiting the histone acetyltransferases (HATs) CREBBP, EP300 and PCAF to the chromatin. This also contributes to the increase in proviral transcription rate, especially when the provirus integrates in transcriptionally silent region of the host genome. To ensure maximal activation of the LTR, Tat mediates nuclear translocation of NF-kappa-B by interacting with host RELA. Through its interaction with host TBP, Tat may also modulate transcription initiation. Tat can reactivate a latently infected cell by penetrating in it and transactivating its LTR promoter. In the cytoplasm, Tat is thought to act as a translational activator of HIV-1 mRNAs. Functionally, extracellular circulating Tat can be endocytosed by surrounding uninfected cells via the binding to several surface receptors such as CD26, CXCR4, heparan sulfate proteoglycans (HSPG) or LDLR. Neurons are rarely infected, but they internalize Tat via their LDLR. Through its interaction with nuclear HATs, Tat is potentially able to control the acetylation-dependent cellular gene expression. Modulates the expression of many cellular genes involved in cell survival, proliferation or in coding for cytokines or cytokine receptors. Tat plays a role in T-cell and neurons apoptosis. Tat induced neurotoxicity and apoptosis probably contribute to neuroAIDS. Circulating Tat also acts as a chemokine-like and/or growth factor-like molecule that binds to specific receptors on the surface of the cells, affecting many cellular pathways. In the vascular system, Tat binds to ITGAV/ITGB3 and ITGA5/ITGB1 integrins dimers at the surface of endothelial cells and competes with bFGF for heparin-binding sites, leading to an excess of soluble bFGF. The polypeptide is Protein Tat (Human immunodeficiency virus type 1 group M subtype A (isolate U455) (HIV-1)).